Reading from the N-terminus, the 282-residue chain is MADGEICRCQVTDPPLIRHEDYDCTARMVQKRIEIGPLGVLLNLNMLFHMSRVRHTDVYPCLNNIMSVSVSLDVPVSSGVGVGRARVLIFTTSRERVGIFHGWQVVPGCFLNAPCYSGVDVLSDELCEANIINTSVSSVAMFNRSYKPEDVWILLLTSSTCYGYHDVVVDIEQCTLPSNIDGCVHCSGVCYFNDNHCFCGRRDSNPSNPPCFQFIKDCNELYGTNETKQFICDLVGDANLDSVNTLTKEGWRRFCDVLWNTTYGDVESRTFARFLWFVFYHD.

The chain is RNA-4 uncharacterized 31.9 kDa protein from Beta macrocarpa (Beet).